Reading from the N-terminus, the 445-residue chain is MGYCPNTPDEIREMLAVIGAGSIEELFAPIPAELRAKSFDLPPGMSEFELMRIMREKAAAGGAEIVPFIGGGIYDHIIPAAVDHLSSRAEFYTAYTPYQPECSQGTLQALFEYQSVICRLTGMEASNASLYDGGTAVAEAALMSLRITERNRVVLDASINPLHREIVTGYLHGLSAEAVEVAPDGCGSDLKRLIDSIDEETAAVIVQNPNFFGSVQDFSELAVKAHEKGALLIISGYPIALGLVASPGEMGADIAVGDGQSLGNPLSFGGPYFGFIATRKRFIRNLPGRIVGETIDNQGRRGYVLTLQAREQHIKRHKATSNICSNQSLCALRGLIFCASLGRKGFEELAVLNYDKAQYAKSRLTGVKGVSVMNAGTTFNEFTLSLPKDAAPVVEKLLACGVAAGVPLVQYYPGMDNALTVTVTEKRSKAEIDRLAALLEEALCS.

It belongs to the GcvP family. N-terminal subunit subfamily. In terms of assembly, the glycine cleavage system is composed of four proteins: P, T, L and H. In this organism, the P 'protein' is a heterodimer of two subunits.

The catalysed reaction is N(6)-[(R)-lipoyl]-L-lysyl-[glycine-cleavage complex H protein] + glycine + H(+) = N(6)-[(R)-S(8)-aminomethyldihydrolipoyl]-L-lysyl-[glycine-cleavage complex H protein] + CO2. The glycine cleavage system catalyzes the degradation of glycine. The P protein binds the alpha-amino group of glycine through its pyridoxal phosphate cofactor; CO(2) is released and the remaining methylamine moiety is then transferred to the lipoamide cofactor of the H protein. This is Probable glycine dehydrogenase (decarboxylating) subunit 1 from Citrifermentans bemidjiense (strain ATCC BAA-1014 / DSM 16622 / JCM 12645 / Bem) (Geobacter bemidjiensis).